The following is a 289-amino-acid chain: Bis(5'-nucleosyl)-tetraphosphatase, symmetrical (289 aa).

This sequence belongs to the Ap4A hydrolase family.

The catalysed reaction is P(1),P(4)-bis(5'-adenosyl) tetraphosphate + H2O = 2 ADP + 2 H(+). In terms of biological role, hydrolyzes diadenosine 5',5'''-P1,P4-tetraphosphate to yield ADP. The polypeptide is Bis(5'-nucleosyl)-tetraphosphatase, symmetrical (Yersinia pseudotuberculosis serotype IB (strain PB1/+)).